The chain runs to 423 residues: MKEIIARHKAGEHLGICSVRSAHPLVIESALLFDLNTDNKVLIEATSNQVNQFGGYTGMKPADFRDFVYGIAQEVGFPRERLILGGDHLGPNCWQNEPADTAMEKSVELIKAYVAAGFSKIHLDASMSCADDPTPLDPMVVAKRAALLCQAAETTATDEQKRHLTYVIGTEVPVPGGEASAINAVHVTREQDAARTLQTHQAAFRALGLDEALNRVIAIVVQPGVEFDHTQIIHYQPQAAQALSAWIKETPMVYEAHSTDYQTRQAYRALVRDHYAILKVGPALTFALREAIFALAQMENELISPEQRSRVLEVIDEVMLNEPGYWKKYYRPTWSQAMVDIHFSLSDRIRYYWPHPRIRQSVEKLIANLNNVTLPLGLISQFMPVQFERLSEGVLTPTPHNLIIDKIQDVLRAYRFGCTPDVA.

It belongs to the GatZ/KbaZ family. GatZ subfamily. In terms of assembly, forms a complex with GatY.

Its pathway is carbohydrate metabolism; D-tagatose 6-phosphate degradation; D-glyceraldehyde 3-phosphate and glycerone phosphate from D-tagatose 6-phosphate: step 2/2. Functionally, component of the tagatose-1,6-bisphosphate aldolase GatYZ that is required for full activity and stability of the Y subunit. Could have a chaperone-like function for the proper and stable folding of GatY. When expressed alone, GatZ does not show any aldolase activity. Is involved in the catabolism of galactitol. This chain is D-tagatose-1,6-bisphosphate aldolase subunit GatZ, found in Salmonella choleraesuis (strain SC-B67).